A 476-amino-acid polypeptide reads, in one-letter code: Aspartyl/glutamyl-tRNA(Asn/Gln) amidotransferase subunit B (476 aa).

This sequence belongs to the GatB/GatE family. GatB subfamily. In terms of assembly, heterotrimer of A, B and C subunits.

The catalysed reaction is L-glutamyl-tRNA(Gln) + L-glutamine + ATP + H2O = L-glutaminyl-tRNA(Gln) + L-glutamate + ADP + phosphate + H(+). It catalyses the reaction L-aspartyl-tRNA(Asn) + L-glutamine + ATP + H2O = L-asparaginyl-tRNA(Asn) + L-glutamate + ADP + phosphate + 2 H(+). Allows the formation of correctly charged Asn-tRNA(Asn) or Gln-tRNA(Gln) through the transamidation of misacylated Asp-tRNA(Asn) or Glu-tRNA(Gln) in organisms which lack either or both of asparaginyl-tRNA or glutaminyl-tRNA synthetases. The reaction takes place in the presence of glutamine and ATP through an activated phospho-Asp-tRNA(Asn) or phospho-Glu-tRNA(Gln). The polypeptide is Aspartyl/glutamyl-tRNA(Asn/Gln) amidotransferase subunit B (Thermosipho melanesiensis (strain DSM 12029 / CIP 104789 / BI429)).